We begin with the raw amino-acid sequence, 430 residues long: Enolase (430 aa).

Gln167 contributes to the (2R)-2-phosphoglycerate binding site. Glu209 serves as the catalytic Proton donor. The Mg(2+) site is built by Asp245, Glu286, and Asp313. (2R)-2-phosphoglycerate is bound by residues Lys338, Arg367, Ser368, and Lys389. The Proton acceptor role is filled by Lys338.

The protein belongs to the enolase family. Mg(2+) is required as a cofactor.

The protein localises to the cytoplasm. It is found in the secreted. The protein resides in the cell surface. It carries out the reaction (2R)-2-phosphoglycerate = phosphoenolpyruvate + H2O. It functions in the pathway carbohydrate degradation; glycolysis; pyruvate from D-glyceraldehyde 3-phosphate: step 4/5. Functionally, catalyzes the reversible conversion of 2-phosphoglycerate (2-PG) into phosphoenolpyruvate (PEP). It is essential for the degradation of carbohydrates via glycolysis. This Synechococcus sp. (strain CC9902) protein is Enolase.